The sequence spans 561 residues: Foot protein 1 variant 1 (561 aa).

A signal peptide spans Met-1–Ala-20. Tyr-22 is subject to 3',4'-dihydroxyphenylalanine. Pro-33 carries the 4-hydroxyproline modification. An A-1; approximate repeat occupies Val-41 to Lys-50. The interval Val-41 to Lys-410 is 13 X 10 AA A-P-P-P-A-W-T-A-W-K. Residues Trp-46, Trp-49, Trp-56, and Trp-59 each carry the 7'-hydroxytryptophan modification. 4 C-linked (Man) hydroxytryptophan glycosylation sites follow: Trp-46, Trp-49, Trp-56, and Trp-59. Residues Ala-51–Lys-60 form an A-2; approximate repeat. One copy of the B-1 repeat lies at Ala-61–Lys-70. Residues Ala-61–Arg-440 are 27 X 10 AA A-T-P-K-P-W-T-A-W-K. Pro-65 is subject to 4-hydroxyproline. Residue Trp-66 is glycosylated (C-linked (Man) tryptophan). Trp-69 is modified (7'-hydroxytryptophan). Trp-69 carries a C-linked (Man) hydroxytryptophan glycan. An A-3 repeat occupies Ala-71–Lys-80. 3 positions are modified to 4-hydroxyproline: Pro-72, Pro-73, and Pro-74. A 7'-hydroxytryptophan mark is found at Trp-76 and Trp-79. C-linked (Man) hydroxytryptophan glycans are attached at residues Trp-76 and Trp-79. The B-2 repeat unit spans residues Ala-81 to Lys-90. At Pro-85 the chain carries 4-hydroxyproline. A C-linked (Man) tryptophan glycan is attached at Trp-86. Position 89 is a 7'-hydroxytryptophan (Trp-89). Residue Trp-89 is glycosylated (C-linked (Man) hydroxytryptophan). An A-4; approximate repeat occupies Ala-91 to Lys-100. 3 positions are modified to 4-hydroxyproline: Pro-92, Pro-93, and Pro-94. 7'-hydroxytryptophan is present on residues Trp-96 and Trp-99. C-linked (Man) hydroxytryptophan glycans are attached at residues Trp-96 and Trp-99. A B-3 repeat occupies Ala-101 to Lys-110. Pro-105 is subject to 4-hydroxyproline. Trp-106 is a glycosylation site (C-linked (Man) tryptophan). Trp-109 is modified (7'-hydroxytryptophan). A C-linked (Man) hydroxytryptophan glycan is attached at Trp-109. The stretch at Ala-111–Lys-120 is one A-5 repeat. 3 positions are modified to 4-hydroxyproline: Pro-112, Pro-113, and Pro-114. 7'-hydroxytryptophan is present on residues Trp-116 and Trp-119. C-linked (Man) hydroxytryptophan glycosylation is found at Trp-116 and Trp-119. One copy of the B-4; approximate repeat lies at Ala-121–Lys-130. Pro-125 carries the 4-hydroxyproline modification. A glycan (C-linked (Man) tryptophan) is linked at Trp-126. 7'-hydroxytryptophan is present on Trp-129. Trp-129 carries C-linked (Man) hydroxytryptophan glycosylation. The stretch at Ala-131–Lys-140 is one B-5 repeat. 4-hydroxyproline is present on Pro-135. The C-linked (Man) tryptophan glycan is linked to Trp-136. The residue at position 139 (Trp-139) is a 7'-hydroxytryptophan. C-linked (Man) hydroxytryptophan glycosylation is present at Trp-139. The B-6 repeat unit spans residues Ala-141–Lys-150. At Pro-145 the chain carries 4-hydroxyproline. Trp-146 carries a C-linked (Man) tryptophan glycan. The residue at position 149 (Trp-149) is a 7'-hydroxytryptophan. A glycan (C-linked (Man) hydroxytryptophan) is linked at Trp-149. The stretch at Ala-151–Lys-160 is one B-7 repeat. Position 155 is a 4-hydroxyproline (Pro-155). Trp-156 carries a C-linked (Man) tryptophan glycan. Trp-159 carries the 7'-hydroxytryptophan modification. Trp-159 carries a C-linked (Man) hydroxytryptophan glycan. A B-8 repeat occupies Ala-161 to Lys-170. Residue Pro-165 is modified to 4-hydroxyproline. C-linked (Man) tryptophan glycosylation is present at Trp-166. The residue at position 169 (Trp-169) is a 7'-hydroxytryptophan. Trp-169 carries a C-linked (Man) hydroxytryptophan glycan. The stretch at Ala-171–Lys-180 is one B-9; approximate repeat. Pro-175 bears the 4-hydroxyproline mark. Trp-176 carries a C-linked (Man) tryptophan glycan. Trp-179 carries the post-translational modification 7'-hydroxytryptophan. A C-linked (Man) hydroxytryptophan glycan is attached at Trp-179. The B-10 repeat unit spans residues Ala-181–Lys-190. Pro-185 bears the 4-hydroxyproline mark. Trp-186 carries C-linked (Man) tryptophan glycosylation. Trp-189 carries the post-translational modification 7'-hydroxytryptophan. A glycan (C-linked (Man) hydroxytryptophan) is linked at Trp-189. The stretch at Ala-191 to Lys-200 is one B-11 repeat. Pro-195 bears the 4-hydroxyproline mark. Trp-196 is a glycosylation site (C-linked (Man) tryptophan). The residue at position 199 (Trp-199) is a 7'-hydroxytryptophan. Residue Trp-199 is glycosylated (C-linked (Man) hydroxytryptophan). The A-6; approximate repeat unit spans residues Ala-201–Lys-210. 4-hydroxyproline is present on residues Pro-202, Pro-203, and Pro-204. 7'-hydroxytryptophan occurs at positions 206 and 209. C-linked (Man) hydroxytryptophan glycans are attached at residues Trp-206 and Trp-209. The B-12; approximate repeat unit spans residues Ala-211 to Lys-220. A 4-hydroxyproline modification is found at Pro-215. A glycan (C-linked (Man) tryptophan) is linked at Trp-216. Trp-219 is subject to 7'-hydroxytryptophan. Residue Trp-219 is glycosylated (C-linked (Man) hydroxytryptophan). A B-13 repeat occupies Ala-221 to Lys-230. 4-hydroxyproline is present on Pro-225. C-linked (Man) tryptophan glycosylation is present at Trp-226. Trp-229 bears the 7'-hydroxytryptophan mark. Trp-229 carries a C-linked (Man) hydroxytryptophan glycan. The stretch at Ala-231 to Lys-240 is one B-14 repeat. Pro-235 carries the post-translational modification 4-hydroxyproline. C-linked (Man) tryptophan glycosylation is present at Trp-236. The residue at position 239 (Trp-239) is a 7'-hydroxytryptophan. Trp-239 carries C-linked (Man) hydroxytryptophan glycosylation. Residues Ala-241 to Lys-250 form a B-15; approximate repeat. The residue at position 245 (Pro-245) is a 4-hydroxyproline. A C-linked (Man) tryptophan glycan is attached at Trp-246. Trp-249 carries the 7'-hydroxytryptophan modification. Residue Trp-249 is glycosylated (C-linked (Man) hydroxytryptophan). A B-16 repeat occupies Ala-251–Lys-260. Residue Pro-255 is modified to 4-hydroxyproline. Trp-256 carries a C-linked (Man) tryptophan glycan. Trp-259 carries the post-translational modification 7'-hydroxytryptophan. A C-linked (Man) hydroxytryptophan glycan is attached at Trp-259. Residues Ala-261–Lys-270 form an A-7 repeat. Pro-262, Pro-263, and Pro-264 each carry 4-hydroxyproline. Residues Trp-266 and Trp-269 each carry the 7'-hydroxytryptophan modification. C-linked (Man) hydroxytryptophan glycosylation is found at Trp-266 and Trp-269. The B-17 repeat unit spans residues Ala-271–Lys-280. Pro-275 is subject to 4-hydroxyproline. A C-linked (Man) tryptophan glycan is attached at Trp-276. Trp-279 carries the 7'-hydroxytryptophan modification. Trp-279 carries a C-linked (Man) hydroxytryptophan glycan. The A-8; approximate repeat unit spans residues Ala-281 to Lys-290. 4-hydroxyproline occurs at positions 282, 283, and 284. 7'-hydroxytryptophan occurs at positions 286 and 289. C-linked (Man) hydroxytryptophan glycosylation is found at Trp-286 and Trp-289. The B-18 repeat unit spans residues Ala-291–Lys-300. 4-hydroxyproline is present on Pro-295. A glycan (C-linked (Man) tryptophan) is linked at Trp-296. At Trp-299 the chain carries 7'-hydroxytryptophan. Trp-299 is a glycosylation site (C-linked (Man) hydroxytryptophan). An A-9; approximate repeat occupies Ala-301–Lys-310. 4-hydroxyproline is present on residues Pro-302, Pro-303, and Pro-304. 7'-hydroxytryptophan occurs at positions 306 and 309. 2 C-linked (Man) hydroxytryptophan glycosylation sites follow: Trp-306 and Trp-309. The B-19 repeat unit spans residues Ala-311–Lys-320. Position 315 is a 4-hydroxyproline (Pro-315). A glycan (C-linked (Man) tryptophan) is linked at Trp-316. A 7'-hydroxytryptophan modification is found at Trp-319. Trp-319 carries C-linked (Man) hydroxytryptophan glycosylation. The B-20 repeat unit spans residues Ala-321–Lys-330. Pro-325 is subject to 4-hydroxyproline. Trp-326 is a glycosylation site (C-linked (Man) tryptophan). Trp-329 carries the 7'-hydroxytryptophan modification. Residue Trp-329 is glycosylated (C-linked (Man) hydroxytryptophan). The stretch at Ala-331–Lys-340 is one B-21 repeat. A 4-hydroxyproline modification is found at Pro-335. Residue Trp-336 is glycosylated (C-linked (Man) tryptophan). The residue at position 339 (Trp-339) is a 7'-hydroxytryptophan. A C-linked (Man) hydroxytryptophan glycan is attached at Trp-339. Residues Ala-341–Lys-350 form a B-22 repeat. A 4-hydroxyproline modification is found at Pro-345. A glycan (C-linked (Man) tryptophan) is linked at Trp-346. The residue at position 349 (Trp-349) is a 7'-hydroxytryptophan. C-linked (Man) hydroxytryptophan glycosylation occurs at Trp-349. The stretch at Val-351–Lys-360 is one A-10; approximate repeat. Residues Pro-352, Pro-353, and Pro-354 each carry the 4-hydroxyproline modification. Trp-356, Trp-359, Trp-366, and Trp-369 each carry 7'-hydroxytryptophan. 4 C-linked (Man) hydroxytryptophan glycosylation sites follow: Trp-356, Trp-359, Trp-366, and Trp-369. Residues Ala-361 to Lys-370 form an A-11; approximate repeat. A B-23 repeat occupies Ala-371 to Lys-380. A 4-hydroxyproline modification is found at Pro-375. A C-linked (Man) tryptophan glycan is attached at Trp-376. Residue Trp-379 is modified to 7'-hydroxytryptophan. A glycan (C-linked (Man) hydroxytryptophan) is linked at Trp-379. One copy of the A-12 repeat lies at Ala-381–Lys-390. 4-hydroxyproline is present on residues Pro-382, Pro-383, and Pro-384. 7'-hydroxytryptophan is present on residues Trp-386 and Trp-389. 2 C-linked (Man) hydroxytryptophan glycosylation sites follow: Trp-386 and Trp-389. The B-24 repeat unit spans residues Ala-391–Lys-400. The residue at position 395 (Pro-395) is a 4-hydroxyproline. Residue Trp-396 is glycosylated (C-linked (Man) tryptophan). Residue Trp-399 is modified to 7'-hydroxytryptophan. C-linked (Man) hydroxytryptophan glycosylation is present at Trp-399. The A-13 repeat unit spans residues Ala-401–Lys-410. 3 positions are modified to 4-hydroxyproline: Pro-402, Pro-403, and Pro-404. Residues Trp-406 and Trp-409 each carry the 7'-hydroxytryptophan modification. Residues Trp-406 and Trp-409 are each glycosylated (C-linked (Man) hydroxytryptophan). A B-25 repeat occupies Ala-411 to Lys-420. At Pro-415 the chain carries 4-hydroxyproline. A glycan (C-linked (Man) tryptophan) is linked at Trp-416. Trp-419 carries the 7'-hydroxytryptophan modification. C-linked (Man) hydroxytryptophan glycosylation occurs at Trp-419. A B-26; approximate repeat occupies Ala-421 to Lys-430. The residue at position 425 (Pro-425) is a 4-hydroxyproline. Trp-426 carries a C-linked (Man) tryptophan glycan. Trp-429 is modified (7'-hydroxytryptophan). Trp-429 carries a C-linked (Man) hydroxytryptophan glycan. The stretch at Ala-431–Arg-440 is one B-27; approximate repeat. Pro-435 carries the post-translational modification 4-hydroxyproline. The C-linked (Man) tryptophan glycan is linked to Trp-436. A 7'-hydroxytryptophan modification is found at Trp-439. Trp-439 is a glycosylation site (C-linked (Man) hydroxytryptophan). Residues Gly-452–Gly-507 are disordered. Gly residues predominate over residues His-453–Gly-462. The 52-residue stretch at Gly-459–Gly-510 folds into the Collagen-like domain. Residues Lys-466 to Pro-496 show a composition bias toward low complexity. A 4-hydroxyproline mark is found at Pro-497, Pro-500, and Pro-506.

As to expression, produced by the byssal gland.

It is found in the secreted. In terms of biological role, provides adhesiveness to the mussel's foot. Mussels produce one of the strongest water insoluble glues. The mussel's adhesive is a bundle of threads, called a byssus, formed by a fibrous collagenous core coated with adhesive proteins. This Perna viridis (Asian green mussel) protein is Foot protein 1 variant 1.